The following is a 342-amino-acid chain: N-acetyl-gamma-glutamyl-phosphate reductase (342 aa).

Residue C156 is part of the active site.

Belongs to the NAGSA dehydrogenase family. Type 1 subfamily.

It localises to the cytoplasm. The enzyme catalyses N-acetyl-L-glutamate 5-semialdehyde + phosphate + NADP(+) = N-acetyl-L-glutamyl 5-phosphate + NADPH + H(+). Its pathway is amino-acid biosynthesis; L-arginine biosynthesis; N(2)-acetyl-L-ornithine from L-glutamate: step 3/4. Catalyzes the NADPH-dependent reduction of N-acetyl-5-glutamyl phosphate to yield N-acetyl-L-glutamate 5-semialdehyde. This chain is N-acetyl-gamma-glutamyl-phosphate reductase, found in Pseudoalteromonas atlantica (strain T6c / ATCC BAA-1087).